Consider the following 1946-residue polypeptide: 1,3-beta-glucan synthase component (1946 aa).

Disordered regions lie at residues 1-127 (MSGY…FSDF) and 152-198 (YGEG…KEPY). Low complexity-rich tracts occupy residues 24–34 (GYYQDDQYYDQ), 43–60 (GDHAAQGDHGAQGTQGDG), and 91–109 (DDYYNNNQGYYDGEYNQGY). Over residues 165–180 (QLSYGGNRSSGASTPN) the composition is skewed to polar residues. N-linked (GlcNAc...) asparagine glycosylation is found at asparagine 171 and asparagine 290. The tract at residues 297-316 (KRKAKKGKKKGGEAGNEAET) is disordered. The next 6 helical transmembrane spans lie at 489-509 (WFHLLLNFNRIWVIHLTMFWF), 537-557 (FSIVGFGGAIASLIQIFATLA), 576-596 (LLFLIVILVLNVAPGVKVFMF), 618-638 (IGIVHFVIAVFTFLFFSVMPL), 675-695 (FGLWLTVFGAKFGESYVYLTL), and 734-754 (IVLILMTFTDLIFFFLDTYLF). N-linked (GlcNAc...) asparagine glycans are attached at residues asparagine 1017 and asparagine 1312. 5 consecutive transmembrane segments (helical) span residues 1356–1376 (NMFIMLSVQSFMLTLMSIGAL), 1413–1433 (CIISIFFVFFISFVPLIVQEL), 1500–1520 (FAGQSIYFGARLLMMLLFATS), 1523–1543 (WQPALTYFWIVLLGLIISPFL), and 1615–1635 (IFLTEILTPLLLAATTTVAYL). Asparagine 1649 is a glycosylation site (N-linked (GlcNAc...) asparagine). The next 5 helical transmembrane spans lie at 1667–1687 (LAVVAFAPIGINAGVLAAMFG), 1703–1723 (FGPVLAGIAHGAAAVFMIIFF), 1738–1758 (LAGIIAAMCIQRFIFKLIVSL), 1803–1823 (FSADFILGHWILFMMAPLILI), and 1864–1884 (AILYFVLFIIFLALVVAPGVI). N-linked (GlcNAc...) asparagine glycosylation occurs at asparagine 1918. Residues 1920-1946 (TEGKTETGTKAGGADASATDASKLRLF) form a disordered region. A compositionally biased stretch (low complexity) spans 1925 to 1940 (ETGTKAGGADASATDA).

This sequence belongs to the glycosyltransferase 48 family. Component of the 1,3-beta-glucan synthase (GS) complex composed of a catalytic subunit GLS1 and a regulatory subunit RHO1.

The protein resides in the membrane. It localises to the cell membrane. It catalyses the reaction [(1-&gt;3)-beta-D-glucosyl](n) + UDP-alpha-D-glucose = [(1-&gt;3)-beta-D-glucosyl](n+1) + UDP + H(+). With respect to regulation, activated by iron ions. Inhibited by manganese, copper and zinc ions. In terms of biological role, catalytic subunit of the 1,3-beta-glucan synthase (GS). Synthesizes 1,3-beta-glucan, a major structural component of the fungal cell wall. Involved in cell wall synthesis, maintenance and remodeling. The sequence is that of 1,3-beta-glucan synthase component from Cordyceps militaris (strain CM01) (Caterpillar fungus).